The following is a 173-amino-acid chain: Globin-like host-protective antigen (173 aa).

The N-terminal stretch at 1 to 15 (MRFLLLAAFVAYAYA) is a signal peptide. In terms of domain architecture, Globin spans 25 to 166 (ALSALDVVPL…FNDEAQKQLA (142 aa)). His114 lines the heme b pocket.

It belongs to the globin family.

It localises to the secreted. Its subcellular location is the extracellular space. Functionally, may be a globin and may play a role in oxygen transport. The chain is Globin-like host-protective antigen from Trichostrongylus colubriformis (Black scour worm).